Reading from the N-terminus, the 277-residue chain is Probable endonuclease 4 (277 aa).

The Zn(2+) site is built by histidine 67, histidine 107, glutamate 142, aspartate 176, histidine 179, histidine 211, aspartate 224, histidine 226, and glutamate 256.

The protein belongs to the AP endonuclease 2 family. The cofactor is Zn(2+).

It catalyses the reaction Endonucleolytic cleavage to 5'-phosphooligonucleotide end-products.. Functionally, endonuclease IV plays a role in DNA repair. It cleaves phosphodiester bonds at apurinic or apyrimidinic (AP) sites, generating a 3'-hydroxyl group and a 5'-terminal sugar phosphate. The polypeptide is Probable endonuclease 4 (Clostridium beijerinckii (strain ATCC 51743 / NCIMB 8052) (Clostridium acetobutylicum)).